Reading from the N-terminus, the 119-residue chain is uncharacterized protein (119 aa).

This is an uncharacterized protein from Saccharomyces cerevisiae (strain ATCC 204508 / S288c) (Baker's yeast).